Here is a 477-residue protein sequence, read N- to C-terminus: Glutamyl-tRNA(Gln) amidotransferase subunit A (477 aa).

Catalysis depends on charge relay system residues K71 and S146. Residue S170 is the Acyl-ester intermediate of the active site.

The protein belongs to the amidase family. GatA subfamily. As to quaternary structure, heterotrimer of A, B and C subunits.

The catalysed reaction is L-glutamyl-tRNA(Gln) + L-glutamine + ATP + H2O = L-glutaminyl-tRNA(Gln) + L-glutamate + ADP + phosphate + H(+). Its function is as follows. Allows the formation of correctly charged Gln-tRNA(Gln) through the transamidation of misacylated Glu-tRNA(Gln) in organisms which lack glutaminyl-tRNA synthetase. The reaction takes place in the presence of glutamine and ATP through an activated gamma-phospho-Glu-tRNA(Gln). This is Glutamyl-tRNA(Gln) amidotransferase subunit A from Halothermothrix orenii (strain H 168 / OCM 544 / DSM 9562).